The chain runs to 1092 residues: Electroneutral sodium bicarbonate exchanger 1 (1092 aa).

Disordered regions lie at residues 1 to 26 (MPAGSNEPDGVLSYQRPDEEAVVDQG), 55 to 95 (LGRQ…HDTP), and 243 to 263 (KKQSDPHSMDRDGQTVSPQSA). At 1-478 (MPAGSNEPDG…DYRDALSLQC (478 aa)) the chain is on the extracellular side. A compositionally biased stretch (basic residues) spans 58–76 (QSHRHHRTHGQKHRRRGGR). Residues 243 to 255 (KKQSDPHSMDRDG) show a composition bias toward basic and acidic residues. The helical transmembrane segment at 479 to 499 (LASFLFLYCACMSPVITFGGL) threads the bilayer. Topologically, residues 500 to 507 (LGEATEGR) are cytoplasmic. Residues 508 to 528 (ISAIESLFGASMTGIAYSLFA) traverse the membrane as a helical segment. At 529–565 (GQPLTILGSTGPVLVFEKILFKFCKDYALSYLSLRAC) the chain is on the extracellular side. Residues 566–586 (IGLWTAFLCIVLVATDASSLV) form a helical membrane-spanning segment. At 587 to 595 (CYITRFTEE) the chain is on the cytoplasmic side. A helical transmembrane segment spans residues 596–616 (AFASLICIIFIYEAIEKLIHL). The Extracellular portion of the chain corresponds to 617–687 (AETYPIHMHS…EFIGSACGHH (71 aa)). Cystine bridges form between cysteine 636–cysteine 684 and cysteine 638–cysteine 672. Asparagine 646 and asparagine 666 each carry an N-linked (GlcNAc) asparagine glycan. The chain crosses the membrane as a helical span at residues 688-708 (GPYTPDVLFWSCILFFATFIV). The Cytoplasmic segment spans residues 709–731 (SSTLKTFKTSRYFPTRVRSTVSD). Residues 732–752 (FAVFLTIFTMVILDFLIGVPS) traverse the membrane as a helical segment. At 753–778 (PKLQVPSVFKPTRDDRGWFISPIGPN) the chain is on the extracellular side. The chain crosses the membrane as a helical span at residues 779–799 (PWWTVIAAIIPALLCTILIFM). At 800–824 (DQQITAVIINRKEHKLKKGCGYHLD) the chain is on the cytoplasmic side. Residues 825–845 (LLVVAIMLGVCSLMGLPWFVA) form a helical membrane-spanning segment. Residues 846-881 (ATVLSITHVNSLKLESECSAPGEQPKFLGIREQRVT) lie on the Extracellular side of the membrane. The chain crosses the membrane as a helical span at residues 882–902 (GLMIFVLMGCSVFMTAVLKFI). The Cytoplasmic portion of the chain corresponds to 903-904 (PM). A helical membrane pass occupies residues 905 to 925 (PVLYGVFLYMGVSSLQGIQFF). Residues 926 to 962 (DRLKLFGMPAKHQPDFIYLRHVPLRKVHLFTLVQLTC) are Extracellular-facing. The chain crosses the membrane as a helical span at residues 963–983 (LVLLWVIKASPAAIVFPMMVL). At 984-1092 (ALVFVRKVMD…GNTKEKSPFN (109 aa)) the chain is on the cytoplasmic side.

The protein belongs to the anion exchanger (TC 2.A.31) family. Homodimer. Expressed in the Purkinje cells and dendrites in the molecular layer of the cerebellum (at protein level). Expressed in the hippocampal neurons (at protein level). Strong expression observed in testis and moderate expression in kidney inner medulla, the submandibular gland, eye, cerebrum and cerebellum.

It is found in the cell membrane. It localises to the apical cell membrane. The protein resides in the basolateral cell membrane. Its subcellular location is the cytoplasmic vesicle. The protein localises to the secretory vesicle. It is found in the synaptic vesicle membrane. It catalyses the reaction 2 hydrogencarbonate(out) + chloride(in) + Na(+)(out) = 2 hydrogencarbonate(in) + chloride(out) + Na(+)(in). Its function is as follows. Mediates electroneutral sodium- and carbonate-dependent chloride-HCO3(-) exchange with a Na(+):HCO3(-) stoichiometry of 2:1. Plays a major role in pH regulation in neurons. Mediates sodium reabsorption in the renal cortical collecting ducts. The protein is Electroneutral sodium bicarbonate exchanger 1 of Rattus norvegicus (Rat).